The chain runs to 422 residues: Elongation factor 1-alpha (422 aa).

Residues 5 to 221 (KPHQNLAVIG…NDLPEPQPPT (217 aa)) enclose the tr-type G domain. The tract at residues 14-21 (GHVDHGKS) is G1. 14–21 (GHVDHGKS) is a binding site for GTP. Ser-21 contributes to the Mg(2+) binding site. Residues 70–74 (GVTID) form a G2 region. The interval 91–94 (DCPG) is G3. GTP-binding positions include 91-95 (DCPGH) and 146-149 (NKMD). Positions 146–149 (NKMD) are G4. The G5 stretch occupies residues 185-187 (SAF).

It belongs to the TRAFAC class translation factor GTPase superfamily. Classic translation factor GTPase family. EF-Tu/EF-1A subfamily.

It is found in the cytoplasm. The catalysed reaction is GTP + H2O = GDP + phosphate + H(+). Its function is as follows. GTP hydrolase that promotes the GTP-dependent binding of aminoacyl-tRNA to the A-site of ribosomes during protein biosynthesis. The sequence is that of Elongation factor 1-alpha from Natronomonas pharaonis (strain ATCC 35678 / DSM 2160 / CIP 103997 / JCM 8858 / NBRC 14720 / NCIMB 2260 / Gabara) (Halobacterium pharaonis).